Here is an 86-residue protein sequence, read N- to C-terminus: uncharacterized protein (86 aa).

This is an uncharacterized protein from Bacillus subtilis (strain 168).